The chain runs to 2971 residues: Reticulocyte-binding protein homolog 1 (2971 aa).

The first 20 residues, M1–F20, serve as a signal peptide directing secretion. Over S21–R2897 the chain is Extracellular. The tract at residues N30–E50 is disordered. N-linked (GlcNAc...) asparagine glycans are attached at residues N70, N78, N87, N135, N286, N384, and N417. Positions L500–N833 are erythrocyte binding domain (EBD). LRR repeat units lie at residues Y528–D553 and L607–K633. N685 is a glycosylation site (N-linked (GlcNAc...) asparagine). LRR repeat units lie at residues I736 to D758 and Q785 to E808. 4 N-linked (GlcNAc...) asparagine glycosylation sites follow: N830, N892, N1000, and N1010. 2 LRR repeats span residues L993–D1018 and L1356–E1381. N-linked (GlcNAc...) asparagine glycosylation is present at N1425. One copy of the LRR 7 repeat lies at A1466 to E1489. N-linked (GlcNAc...) asparagine glycosylation is present at N1496. LRR repeat units follow at residues Y1512–N1537, S1586–E1609, and E1611–N1636. Residues N1664, N1692, N1718, N1816, and N1844 are each glycosylated (N-linked (GlcNAc...) asparagine). LRR repeat units follow at residues L1700–Y1723 and L1809–N1834. The LRR 13 repeat unit spans residues Q1880–E1903. N-linked (GlcNAc...) asparagine glycosylation is found at N1913 and N1918. The stretch at K1944–F1967 is one LRR 14 repeat. N-linked (GlcNAc...) asparagine glycans are attached at residues N2054, N2207, N2289, N2300, N2338, and N2405. An LRR 15 repeat occupies I2523–I2548. 2 N-linked (GlcNAc...) asparagine glycosylation sites follow: N2598 and N2752. An LRR 16 repeat occupies E2731 to T2754. Basic and acidic residues-rich tracts occupy residues K2773–N2782 and Q2795–L2804. Disordered stretches follow at residues K2773–Q2825 and H2840–Q2862. The N-linked (GlcNAc...) asparagine glycan is linked to N2811. A compositionally biased stretch (basic and acidic residues) spans E2814–Q2825. A helical membrane pass occupies residues M2898–I2918. The Cytoplasmic portion of the chain corresponds to N2919–I2971.

May in part interact with AMA1 in the moving tight junction between the parasite and the erythrocyte membranes; the interaction may facilitate junction formation and active invasion. Post-translationally, proteolytically processed into multiple fragments following schizont rupture. In the mature schizont stage prior to merozoite release, full length RH1 is processed post-Golgi into a 240 kDa N-terminal form and a 120 kDa C-terminal form containing the transmembrane region. Both forms appear not to form a complex. However, they appear to remain in close proximity in late schizonts. Following merozoite invasion of host erythrocytes, the 240 kDa form is further processed into a 140 kDa form which may be involved in the disengagement of the ligand-receptor complex required during the invasion process. Also, the 120 kDa is further cleaved into a 110 kDa form and a transmembrane 9 kDa form probably by ROM4.

The protein resides in the cell membrane. It is found in the secreted. The protein localises to the cell junction. Its subcellular location is the tight junction. It localises to the cytoplasmic vesicle. The protein resides in the secretory vesicle. It is found in the rhoptry. During the asexual blood stage, binds to a sialic acid containing receptor on the surface of the host erythrocyte and thus is involved in merozoite invasion. Binds erythrocytes via a neuraminidase sensitive and trypsin-, chymotrypsin-resistant receptor. After merozoite attachment and reorientation, RH1 binding to its erythrocyte receptor triggers an increase in intracellular Ca(2+) within the parasite resulting in the release of microneme proteins such as EBA175 which in turn leads to the formation of the tight junction between parasite and host cell. This is Reticulocyte-binding protein homolog 1 from Plasmodium falciparum (isolate 3D7).